The chain runs to 366 residues: Ribosomal RNA large subunit methyltransferase M (366 aa).

S-adenosyl-L-methionine-binding positions include S188, 221–224, D240, D260, and D277; that span reads CPGG. K306 functions as the Proton acceptor in the catalytic mechanism.

Belongs to the class I-like SAM-binding methyltransferase superfamily. RNA methyltransferase RlmE family. RlmM subfamily. Monomer.

It is found in the cytoplasm. The catalysed reaction is cytidine(2498) in 23S rRNA + S-adenosyl-L-methionine = 2'-O-methylcytidine(2498) in 23S rRNA + S-adenosyl-L-homocysteine + H(+). Catalyzes the 2'-O-methylation at nucleotide C2498 in 23S rRNA. This Salmonella newport (strain SL254) protein is Ribosomal RNA large subunit methyltransferase M.